A 191-amino-acid polypeptide reads, in one-letter code: Cytochrome c oxidase assembly protein CtaG (191 aa).

Topologically, residues 1 to 9 are cytoplasmic; the sequence is MALNGPQKT. Residues 10-30 form a helical; Signal-anchor for type II membrane protein membrane-spanning segment; that stretch reads VVQLVSVVVVMGGLAWASVPF. Topologically, residues 31 to 191 are periplasmic; it reads YDWFCRVTGF…LDAGEKTNTN (161 aa).

This sequence belongs to the COX11/CtaG family.

The protein resides in the cell inner membrane. Its function is as follows. Exerts its effect at some terminal stage of cytochrome c oxidase synthesis, probably by being involved in the insertion of the copper B into subunit I. The sequence is that of Cytochrome c oxidase assembly protein CtaG from Ruegeria pomeroyi (strain ATCC 700808 / DSM 15171 / DSS-3) (Silicibacter pomeroyi).